The primary structure comprises 110 residues: MSEFKRIPPEQALELRKQEGAVVVDIRDAQAFAAGHITGARHLDNHSVADFIRGANLDAPTLVVCYHGNSSQSAAAYLVGQGFSDVYSVDGGFELWRATYPAETAQGAAE.

The 89-residue stretch at 17-105 folds into the Rhodanese domain; sequence KQEGAVVVDI…WRATYPAETA (89 aa). Cysteine 65 functions as the Cysteine persulfide intermediate in the catalytic mechanism.

Belongs to the GlpE family.

Its subcellular location is the cytoplasm. It carries out the reaction thiosulfate + hydrogen cyanide = thiocyanate + sulfite + 2 H(+). The catalysed reaction is thiosulfate + [thioredoxin]-dithiol = [thioredoxin]-disulfide + hydrogen sulfide + sulfite + 2 H(+). Its function is as follows. Transferase that catalyzes the transfer of sulfur from thiosulfate to thiophilic acceptors such as cyanide or dithiols. May function in a CysM-independent thiosulfate assimilation pathway by catalyzing the conversion of thiosulfate to sulfite, which can then be used for L-cysteine biosynthesis. This is Thiosulfate sulfurtransferase GlpE from Pseudomonas putida (strain GB-1).